We begin with the raw amino-acid sequence, 368 residues long: S-adenosylmethionine decarboxylase proenzyme 1 (368 aa).

Catalysis depends on residues Glu9 and Arg12. Ser69 acts as the Schiff-base intermediate with substrate; via pyruvic acid in catalysis. The residue at position 69 (Ser69) is a Pyruvic acid (Ser); by autocatalysis. Cys83 acts as the Proton donor; for catalytic activity in catalysis. Active-site proton acceptor; for processing activity residues include Ser234 and His247.

Belongs to the eukaryotic AdoMetDC family. Pyruvate serves as cofactor. Is synthesized initially as an inactive proenzyme. Formation of the active enzyme involves a self-maturation process in which the active site pyruvoyl group is generated from an internal serine residue via an autocatalytic post-translational modification. Two non-identical subunits are generated from the proenzyme in this reaction, and the pyruvate is formed at the N-terminus of the alpha chain, which is derived from the carboxyl end of the proenzyme. The post-translation cleavage follows an unusual pathway, termed non-hydrolytic serinolysis, in which the side chain hydroxyl group of the serine supplies its oxygen atom to form the C-terminus of the beta chain, while the remainder of the serine residue undergoes an oxidative deamination to produce ammonia and the pyruvoyl group blocking the N-terminus of the alpha chain.

It catalyses the reaction S-adenosyl-L-methionine + H(+) = S-adenosyl 3-(methylsulfanyl)propylamine + CO2. Its pathway is amine and polyamine biosynthesis; S-adenosylmethioninamine biosynthesis; S-adenosylmethioninamine from S-adenosyl-L-methionine: step 1/1. This Brassica juncea (Indian mustard) protein is S-adenosylmethionine decarboxylase proenzyme 1 (SAMDC1).